Reading from the N-terminus, the 178-residue chain is Nicotinamide-nucleotide adenylyltransferase (178 aa).

Belongs to the archaeal NMN adenylyltransferase family.

Its subcellular location is the cytoplasm. It catalyses the reaction beta-nicotinamide D-ribonucleotide + ATP + H(+) = diphosphate + NAD(+). The protein operates within cofactor biosynthesis; NAD(+) biosynthesis; NAD(+) from nicotinamide D-ribonucleotide: step 1/1. The polypeptide is Nicotinamide-nucleotide adenylyltransferase (Pyrobaculum neutrophilum (strain DSM 2338 / JCM 9278 / NBRC 100436 / V24Sta) (Thermoproteus neutrophilus)).